Reading from the N-terminus, the 121-residue chain is Large ribosomal subunit protein bL12 (121 aa).

This sequence belongs to the bacterial ribosomal protein bL12 family. Homodimer. Part of the ribosomal stalk of the 50S ribosomal subunit. Forms a multimeric L10(L12)X complex, where L10 forms an elongated spine to which 2 to 4 L12 dimers bind in a sequential fashion. Binds GTP-bound translation factors.

Forms part of the ribosomal stalk which helps the ribosome interact with GTP-bound translation factors. Is thus essential for accurate translation. The chain is Large ribosomal subunit protein bL12 from Klebsiella pneumoniae (strain 342).